The primary structure comprises 207 residues: Protein I (207 aa).

The protein belongs to the coronavirus I protein family.

It localises to the virion. Its function is as follows. Structural protein that is not essential for the viral replication either in tissue culture or in its natural host. The protein is Protein I (N) of Sus scrofa (Pig).